The primary structure comprises 446 residues: tRNA-2-methylthio-N(6)-dimethylallyladenosine synthase (446 aa).

The 122-residue stretch at 3–124 (KKLYIKTYGC…LPELISKVVR (122 aa)) folds into the MTTase N-terminal domain. Positions 12, 48, 87, 162, 166, and 169 each coordinate [4Fe-4S] cluster. In terms of domain architecture, Radical SAM core spans 148–380 (YPQGASSFIS…QKELAAQQLA (233 aa)). The 64-residue stretch at 383-446 (ESCIGSTMKV…LNSLSGEIYR (64 aa)) folds into the TRAM domain.

It belongs to the methylthiotransferase family. MiaB subfamily. In terms of assembly, monomer. The cofactor is [4Fe-4S] cluster.

Its subcellular location is the cytoplasm. It carries out the reaction N(6)-dimethylallyladenosine(37) in tRNA + (sulfur carrier)-SH + AH2 + 2 S-adenosyl-L-methionine = 2-methylsulfanyl-N(6)-dimethylallyladenosine(37) in tRNA + (sulfur carrier)-H + 5'-deoxyadenosine + L-methionine + A + S-adenosyl-L-homocysteine + 2 H(+). In terms of biological role, catalyzes the methylthiolation of N6-(dimethylallyl)adenosine (i(6)A), leading to the formation of 2-methylthio-N6-(dimethylallyl)adenosine (ms(2)i(6)A) at position 37 in tRNAs that read codons beginning with uridine. The polypeptide is tRNA-2-methylthio-N(6)-dimethylallyladenosine synthase (Rickettsia bellii (strain RML369-C)).